A 475-amino-acid polypeptide reads, in one-letter code: Probable proline--tRNA ligase, mitochondrial (475 aa).

The N-terminal 29 residues, 1–29 (MEGLLTRCRTLSALAACSLRHCRYIIHKC), are a transit peptide targeting the mitochondrion.

It belongs to the class-II aminoacyl-tRNA synthetase family.

The protein localises to the mitochondrion matrix. The catalysed reaction is tRNA(Pro) + L-proline + ATP = L-prolyl-tRNA(Pro) + AMP + diphosphate. Its function is as follows. Mitochondrial aminoacyl-tRNA synthetase that catalyzes the specific attachment of the proline amino acid (aa) to the homologous transfer RNA (tRNA), further participating in protein synthesis. The reaction occurs in a two steps: proline is first activated by ATP to form Pro-AMP and then transferred to the acceptor end of tRNA(Pro). The chain is Probable proline--tRNA ligase, mitochondrial (Pars2) from Mus musculus (Mouse).